A 268-amino-acid polypeptide reads, in one-letter code: Tryptophan synthase alpha chain (268 aa).

Catalysis depends on proton acceptor residues glutamate 49 and aspartate 60.

Belongs to the TrpA family. In terms of assembly, tetramer of two alpha and two beta chains.

It carries out the reaction (1S,2R)-1-C-(indol-3-yl)glycerol 3-phosphate + L-serine = D-glyceraldehyde 3-phosphate + L-tryptophan + H2O. It functions in the pathway amino-acid biosynthesis; L-tryptophan biosynthesis; L-tryptophan from chorismate: step 5/5. Its function is as follows. The alpha subunit is responsible for the aldol cleavage of indoleglycerol phosphate to indole and glyceraldehyde 3-phosphate. This Vibrio parahaemolyticus serotype O3:K6 (strain RIMD 2210633) protein is Tryptophan synthase alpha chain.